Consider the following 171-residue polypeptide: MPLLDSFTVDHTRMAAPAVRVAKTMKTPHGDNITVFDLRFCRPNIEVMPERGIHTLEHLFAGFMRDHLNGDGVEIIDISPMGCRTGFYMSLIGTPDEQRVAESWKAAMSDVLKVTDQRKIPELNEYQCGTYDMHSLKEAQEIAQHIVDHDIGINQNDDLALPKDKLAELHI.

Fe cation-binding residues include H54, H58, and C128.

It belongs to the LuxS family. Homodimer. It depends on Fe cation as a cofactor.

The catalysed reaction is S-(5-deoxy-D-ribos-5-yl)-L-homocysteine = (S)-4,5-dihydroxypentane-2,3-dione + L-homocysteine. Its function is as follows. Involved in the synthesis of autoinducer 2 (AI-2) which is secreted by bacteria and is used to communicate both the cell density and the metabolic potential of the environment. The regulation of gene expression in response to changes in cell density is called quorum sensing. Catalyzes the transformation of S-ribosylhomocysteine (RHC) to homocysteine (HC) and 4,5-dihydroxy-2,3-pentadione (DPD). The sequence is that of S-ribosylhomocysteine lyase from Pectobacterium atrosepticum (strain SCRI 1043 / ATCC BAA-672) (Erwinia carotovora subsp. atroseptica).